Reading from the N-terminus, the 405-residue chain is Bestrophin homolog 14 (405 aa).

Helical transmembrane passes span 28-48 (LIGF…LLDE), 63-83 (IGAQ…LIVA), 223-243 (LVYT…CLIG), and 256-276 (EITI…LGWL).

Belongs to the anion channel-forming bestrophin (TC 1.A.46) family. Calcium-sensitive chloride channel subfamily.

It localises to the membrane. The polypeptide is Bestrophin homolog 14 (best-14) (Caenorhabditis elegans).